Reading from the N-terminus, the 152-residue chain is Transcriptional repressor NrdR (152 aa).

The segment at 3–34 is a zinc-finger region; it reads CPYCSYNESKVVDSRSTEDSISIRRRRECLEC. The ATP-cone domain occupies 49 to 139; the sequence is ILVIKKNLNR…VYRQFKDINT (91 aa).

This sequence belongs to the NrdR family. Zn(2+) serves as cofactor.

In terms of biological role, negatively regulates transcription of bacterial ribonucleotide reductase nrd genes and operons by binding to NrdR-boxes. The protein is Transcriptional repressor NrdR of Clostridium tetani (strain Massachusetts / E88).